A 1104-amino-acid chain; its full sequence is Mitogen-activated protein kinase kinase kinase 9 (1104 aa).

Over residues 12 to 22 (ASAAAAAPPGE) the composition is skewed to low complexity. Residues 12–47 (ASAAAAAPPGEDGAGAGAEEEEEEEEEAAAAVGPGE) form a disordered region. Positions 29–39 (AEEEEEEEEEA) are enriched in acidic residues. An SH3 domain is found at 52-116 (APLPYWTAVF…PSNYVTPRSA (65 aa)). The Protein kinase domain maps to 144–412 (LTLEEIIGIG…LTTIEESGFF (269 aa)). Residues 150-158 (IGIGGFGKV) and Lys171 contribute to the ATP site. Residue Asp268 is the Proton acceptor of the active site. Phosphothreonine; by autocatalysis is present on residues Thr304 and Thr305. Phosphoserine; by autocatalysis is present on Ser308. The residue at position 312 (Thr312) is a Phosphothreonine; by autocatalysis. Leucine-zipper stretches follow at residues 430–451 (IQEMFDQLRAKEKELRTWEEEL) and 465–486 (LRRREQELAEREIDILERELNI). Disordered stretches follow at residues 532–636 (ASPT…PHFH), 675–742 (MEDE…LKRG), 781–819 (EEPEPPAREEKKRREGLFQRSSRPRRSTSPPSRKLFKKE), and 890–1038 (RDPN…CFAS). Ser533 carries the phosphoserine modification. Polar residues-rich tracts occupy residues 566-575 (PGESSKTWGR) and 723-739 (PVNSATSTPQLTPTNSL). A compositionally biased stretch (basic and acidic residues) spans 785 to 797 (PPAREEKKRREGL). Residues 893–910 (NQSLTPTHVTLTTPSQPS) are compositionally biased toward polar residues. Over residues 929 to 944 (SRSPSSNGLSPSPGAG) the composition is skewed to low complexity. Positions 1014-1038 (HARSTSPANSSSTETPSNLDSCFAS) are enriched in polar residues.

This sequence belongs to the protein kinase superfamily. STE Ser/Thr protein kinase family. MAP kinase kinase kinase subfamily. As to quaternary structure, homodimer. The cofactor is Mg(2+). Autophosphorylation on serine and threonine residues within the activation loop plays a role in enzyme activation. Thr-312 is likely to be the main autophosphorylation site. Autophosphorylation also occurs on Thr-304 and Ser-308. Expressed in epithelial tumor cell lines of colonic, breast and esophageal origin.

The catalysed reaction is L-seryl-[protein] + ATP = O-phospho-L-seryl-[protein] + ADP + H(+). The enzyme catalyses L-threonyl-[protein] + ATP = O-phospho-L-threonyl-[protein] + ADP + H(+). With respect to regulation, homodimerization via the leucine zipper domains is required for autophosphorylation of multiple sites in the activation loop and subsequent activation. Autophosphorylation at Thr-312 is the key step in activation of MAP3K9/MLK1 and is required for full phosphorylation. Autophosphorylation at Thr-304 and Ser-308 have been shown to be of secondary importance in the activation of MAP3K9/MLK1. CEP-1347 and many indolocarbazole analogs have been shown to act as inhibitors of MAP3K9/MLK1 activity. In terms of biological role, serine/threonine kinase which acts as an essential component of the MAP kinase signal transduction pathway. Plays an important role in the cascades of cellular responses evoked by changes in the environment. Once activated, acts as an upstream activator of the MKK/JNK signal transduction cascade through the phosphorylation of MAP2K4/MKK4 and MAP2K7/MKK7 which in turn activate the JNKs. The MKK/JNK signaling pathway regulates stress response via activator protein-1 (JUN) and GATA4 transcription factors. Also plays a role in mitochondrial death signaling pathway, including the release cytochrome c, leading to apoptosis. The sequence is that of Mitogen-activated protein kinase kinase kinase 9 (MAP3K9) from Homo sapiens (Human).